The primary structure comprises 116 residues: Venom nerve growth factor (116 aa).

Disulfide bonds link cysteine 14-cysteine 78, cysteine 56-cysteine 106, and cysteine 66-cysteine 108. Lysine 86 provides a ligand contact to a 1,2-diacyl-sn-glycerol.

The protein belongs to the NGF-beta family. In terms of assembly, homodimer; non-covalently linked. Interacts with NTRK1. In terms of processing, not glycosylated. As to expression, expressed by the venom gland.

The protein resides in the secreted. Functionally, nerve growth factor is important for the development and maintenance of the sympathetic and sensory nervous systems. It stimulates division and differentiation of sympathetic and embryonic sensory neurons as well as basal forebrain cholinergic neurons in the brain. Its relevance in the snake venom is not clear. However, it has been shown to inhibit metalloproteinase-dependent proteolysis of platelet glycoprotein Ib alpha, suggesting a metalloproteinase inhibition to prevent metalloprotease autodigestion and/or protection against prey proteases. Binds a lipid between the two protein chains in the homodimer. The lipid-bound form promotes histamine relase from mouse mast cells, contrary to the lipid-free form. The sequence is that of Venom nerve growth factor from Naja atra (Chinese cobra).